The sequence spans 796 residues: Endonuclease MutS2 (796 aa).

ATP is bound at residue 339-346 (GPNTGGKT). The tract at residues 620-644 (EKLGDTDSSLVSKAKKNRKQHKPSD) is disordered. A Smr domain is found at 721–796 (LNIIGKRVDE…DHGVTIVEFK (76 aa)).

The protein belongs to the DNA mismatch repair MutS family. MutS2 subfamily. In terms of assembly, homodimer. Binds to stalled ribosomes, contacting rRNA.

In terms of biological role, endonuclease that is involved in the suppression of homologous recombination and thus may have a key role in the control of bacterial genetic diversity. Its function is as follows. Acts as a ribosome collision sensor, splitting the ribosome into its 2 subunits. Detects stalled/collided 70S ribosomes which it binds and splits by an ATP-hydrolysis driven conformational change. Acts upstream of the ribosome quality control system (RQC), a ribosome-associated complex that mediates the extraction of incompletely synthesized nascent chains from stalled ribosomes and their subsequent degradation. Probably generates substrates for RQC. The sequence is that of Endonuclease MutS2 from Lachnoclostridium phytofermentans (strain ATCC 700394 / DSM 18823 / ISDg) (Clostridium phytofermentans).